Reading from the N-terminus, the 359-residue chain is MAEPFLSEYQHQPQTSNCTGAAAVQEELNPERPPGAEERVPEEDSRWQSRAFPQLGGRPGPEGEGSLESQPPPLQTQACPESSCLREGEKGQNGDDSSAGGDFPPPAEVEPTPEAELLAQPCHDSEASKLGAPAAGGEEEWGQQQRQLGKKKHRRRPSKKKRHWKPYYKLTWEEKKKFDEKQSLRASRIRAEMFAKGQPVAPYNTTQFLMDDHDQEEPDLKTGLYSKRAAAKSDDTSDDDFMEEGGEEDGGSDGMGGDGSEFLQRDFSETYERYHTESLQNMSKQELIKEYLELEKCLSRMEDENNRLRLESKRLGGDDARVRELELELDRLRAENLQLLTENELHRQQERAPLSKFGD.

A disordered region spans residues 1-163 (MAEPFLSEYQ…RRRPSKKKRH (163 aa)). A compositionally biased stretch (polar residues) spans 9–19 (YQHQPQTSNCT). 2 stretches are compositionally biased toward basic and acidic residues: residues 34–47 (PGAEERVPEEDSRW) and 84–93 (CLREGEKGQN). 2 positions are modified to phosphoserine: S97 and S98. Positions 148–163 (LGKKKHRRRPSKKKRH) are enriched in basic residues. The basic region; mediates nuclear localization and interaction with 7SK snRNA and NR3C1 stretch occupies residues 150-177 (KKKHRRRPSKKKRHWKPYYKLTWEEKKK). Positions 202–205 (PYNT) are interaction with P-TEFb. An autoinhibitory acidic region; in absence of 7SK snRNA interacts with the basic region preventing interaction with P-TEFb and modulating subcellular localization region spans residues 210 to 250 (MDDHDQEEPDLKTGLYSKRAAAKSDDTSDDDFMEEGGEEDG). A disordered region spans residues 213–262 (HDQEEPDLKTGLYSKRAAAKSDDTSDDDFMEEGGEEDGGSDGMGGDGSEF). At S233 the chain carries Phosphoserine. T236 carries the post-translational modification Phosphothreonine. The segment covering 236-251 (TSDDDFMEEGGEEDGG) has biased composition (acidic residues). S237, S252, and S260 each carry phosphoserine. Residues 283–349 (SKQELIKEYL…LTENELHRQQ (67 aa)) adopt a coiled-coil conformation. Residues 286–314 (ELIKEYLELEKCLSRMEDENNRLRLESKR) form a mediates interaction with CCNT1 region. A required for inhibition of ESR1-dependent transcription region spans residues 310 to 355 (LESKRLGGDDARVRELELELDRLRAENLQLLTENELHRQQERAPLS).

It belongs to the HEXIM family. As to quaternary structure, homooligomer and heterooligomer with HEXIM2; probably dimeric. Core component of the 7SK RNP complex, at least composed of 7SK RNA, LARP7, MEPCE, HEXIM1 (or HEXIM2) and P-TEFb (composed of CDK9 and CCNT1/cyclin-T1). Interacts with the N-CoR complex through NCOR1. Interacts with ESR1 and NR3C1. May interact with NF-kappa-B through RELA. Interacts with CCNT2; mediates formation of a tripartite complex with KPNA2. Part of the HDP-RNP complex composed of at least HEXIM1, PRKDC, XRCC5, XRCC6, paraspeckle proteins (SFPQ, NONO, PSPC1, RBM14, and MATR3) and NEAT1 non-coding RNA. As to expression, ubiquitously expressed with higher expression in placenta. HEXIM1 and HEXIM2 are differentially expressed. Expressed in endocrine tissues.

The protein resides in the nucleus. Its subcellular location is the cytoplasm. In terms of biological role, transcriptional regulator which functions as a general RNA polymerase II transcription inhibitor. Core component of the 7SK RNP complex: in cooperation with 7SK snRNA sequesters P-TEFb in a large inactive 7SK snRNP complex preventing RNA polymerase II phosphorylation and subsequent transcriptional elongation. May also regulate NF-kappa-B, ESR1, NR3C1 and CIITA-dependent transcriptional activity. Plays a role in the regulation of DNA virus-mediated innate immune response by assembling into the HDP-RNP complex, a complex that serves as a platform for IRF3 phosphorylation and subsequent innate immune response activation through the cGAS-STING pathway. This Homo sapiens (Human) protein is Protein HEXIM1 (HEXIM1).